The primary structure comprises 686 residues: tRNA wybutosine-synthesizing protein 4 (686 aa).

The tract at residues 1–22 is disordered; that stretch reads MGPRSRQRRTGTVQSTNDSSSL. Residues 10–22 show a composition bias toward polar residues; the sequence is TGTVQSTNDSSSL. S-adenosyl-L-methionine contacts are provided by residues Arg-59, Gly-89, Asp-114, 161–162, and Glu-188; that span reads DL.

It belongs to the methyltransferase superfamily. LCMT family. In terms of assembly, interacts with RNF144B/IBRDC2.

The catalysed reaction is 7-[(3S)-3-amino-3-carboxypropyl]wyosine(37) in tRNA(Phe) + S-adenosyl-L-methionine = 7-[(3S)-(3-amino-3-methoxycarbonyl)propyl]wyosine(37) in tRNA(Phe) + S-adenosyl-L-homocysteine. It catalyses the reaction 7-[(3S)-(3-amino-3-methoxycarbonyl)propyl]wyosine(37) in tRNA(Phe) + S-adenosyl-L-methionine + CO2 = wybutosine(37) in tRNA(Phe) + S-adenosyl-L-homocysteine + 2 H(+). The protein operates within tRNA modification; wybutosine-tRNA(Phe) biosynthesis. Functionally, probable S-adenosyl-L-methionine-dependent methyltransferase that acts as a component of the wybutosine biosynthesis pathway. Wybutosine is a hyper modified guanosine with a tricyclic base found at the 3'-position adjacent to the anticodon of eukaryotic phenylalanine tRNA. May methylate the carboxyl group of leucine residues to form alpha-leucine ester residues. This chain is tRNA wybutosine-synthesizing protein 4 (Lcmt2), found in Rattus norvegicus (Rat).